The chain runs to 575 residues: Melatonin-related receptor (575 aa).

Residues 1-30 (MGRTLAVPTPYGCIGCKLPQPDYPPALIVF) lie on the Extracellular side of the membrane. Residues 31–51 (MFCAMVITIVVDLIGNSMVIL) traverse the membrane as a helical segment. Topologically, residues 52–64 (AVSKNKKLRNSGN) are cytoplasmic. Residues 65 to 85 (VFVVSLSVADMLVAIYPYPLM) form a helical membrane-spanning segment. Over 86–103 (LHAMAIGGWDLSKLQCQM) the chain is Extracellular. A disulfide bridge connects residues Cys101 and Cys178. Residues 104 to 124 (VGFITGLSVVGSIFNIMAIAI) form a helical membrane-spanning segment. Over 125-143 (NRYCYICHSLQYERIFSVR) the chain is Cytoplasmic. A helical transmembrane segment spans residues 144–164 (NTCIYLAVTWIMTVLAVLPNM). The Extracellular portion of the chain corresponds to 165–188 (YIGTIEYDPRTYTCIFNYVNNPAF). The chain crosses the membrane as a helical span at residues 189–209 (AVTIVCIHFVLPLLIVGFCYV). Over 210–239 (KIWTKVLAARDPAGQNPDNQLAEVRNFLTM) the chain is Cytoplasmic. A helical transmembrane segment spans residues 240–260 (FVIFLLFAVCWCPINALTVLV). Residues 261-273 (AVNPKEMAGKIPN) lie on the Extracellular side of the membrane. A helical membrane pass occupies residues 274–294 (WVYLAAYFIAYFNSCLNAVIY). Over 295–575 (GVLNENFRRE…VDADSDEMAV (281 aa)) the chain is Cytoplasmic. Disordered regions lie at residues 368 to 421 (VPLP…TVYP) and 446 to 474 (SSHPKPITGPSKTAISPATSFPKPTTGYT). Residues 455 to 474 (PSKTAISPATSFPKPTTGYT) are compositionally biased toward polar residues.

Belongs to the G-protein coupled receptor 1 family. As to quaternary structure, homodimer, and heterodimer with MTNR1A and MTNR1B. Interacts with KAT5. Interacts with RTN4 isoform A/NOGO-A. Interacts with TGFBR1.

The protein resides in the cell membrane. In terms of biological role, g protein-coupled receptor that plays a role in numerous physiological processes including regulation of energy metabolism, neurite outgrowth or cell migration. Promotes self-renewal and neuronal differentiation of neural progenitor cells through activation of the NOTCH and WNT/beta-catenin signaling pathways. Modulates the KAT5-dependent glucocorticoid receptor signaling by modulating KAT5 subcellular compartmentalisation. Also plays a role in the activation TGFBR1 in the absence of TGFBR2 by interfering with FKBP1A binding to TGFBR1, leading to induction of both canonical and non-canonical SMAD signaling pathways resulting in inhibition of proliferation or promotion of migration. The sequence is that of Melatonin-related receptor (GPR50) from Ovis aries (Sheep).